Reading from the N-terminus, the 147-residue chain is Large ribosomal subunit protein bL9 (147 aa).

This sequence belongs to the bacterial ribosomal protein bL9 family.

Functionally, binds to the 23S rRNA. This chain is Large ribosomal subunit protein bL9, found in Mesoplasma florum (strain ATCC 33453 / NBRC 100688 / NCTC 11704 / L1) (Acholeplasma florum).